We begin with the raw amino-acid sequence, 510 residues long: Beta-galactosidase (510 aa).

The active-site Proton donor is the Glu-210. The Nucleophile role is filled by Glu-414.

This sequence belongs to the glycosyl hydrolase 1 family.

It catalyses the reaction Hydrolysis of terminal non-reducing beta-D-galactose residues in beta-D-galactosides.. In Pyrococcus woesei, this protein is Beta-galactosidase.